We begin with the raw amino-acid sequence, 327 residues long: Phenylalanine--tRNA ligase alpha subunit (327 aa).

Position 252 (Glu252) interacts with Mg(2+).

Belongs to the class-II aminoacyl-tRNA synthetase family. Phe-tRNA synthetase alpha subunit type 1 subfamily. In terms of assembly, tetramer of two alpha and two beta subunits. It depends on Mg(2+) as a cofactor.

Its subcellular location is the cytoplasm. It catalyses the reaction tRNA(Phe) + L-phenylalanine + ATP = L-phenylalanyl-tRNA(Phe) + AMP + diphosphate + H(+). This is Phenylalanine--tRNA ligase alpha subunit from Shewanella baltica (strain OS223).